Here is a 447-residue protein sequence, read N- to C-terminus: tRNA modification GTPase MnmE (447 aa).

Positions 22, 81, and 121 each coordinate (6S)-5-formyl-5,6,7,8-tetrahydrofolate. The TrmE-type G domain maps to 217-373 (GIVLAITGET…LMSEIVSYAE (157 aa)). A K(+)-binding site is contributed by Asn-227. Residues 227-232 (NTGKSS), 246-252 (SDIPGTT), and 271-274 (DTAG) each bind GTP. Ser-231 is a Mg(2+) binding site. Residues Ser-246, Ile-248, and Thr-251 each contribute to the K(+) site. Position 252 (Thr-252) interacts with Mg(2+). Lys-447 provides a ligand contact to (6S)-5-formyl-5,6,7,8-tetrahydrofolate.

Belongs to the TRAFAC class TrmE-Era-EngA-EngB-Septin-like GTPase superfamily. TrmE GTPase family. As to quaternary structure, homodimer. Heterotetramer of two MnmE and two MnmG subunits. The cofactor is K(+).

The protein localises to the cytoplasm. In terms of biological role, exhibits a very high intrinsic GTPase hydrolysis rate. Involved in the addition of a carboxymethylaminomethyl (cmnm) group at the wobble position (U34) of certain tRNAs, forming tRNA-cmnm(5)s(2)U34. This is tRNA modification GTPase MnmE from Orientia tsutsugamushi (strain Boryong) (Rickettsia tsutsugamushi).